The chain runs to 177 residues: MAESNDWLSVGKIVAVQGLLGELRVNPASDFPERFTVPGPRWLRSRQGGEPSEIQLKKGRQLPGKSLFVVRFEGVDNRSAAETLVGMELLVPADDRPELAEGEFHLLDLVGLKARLTADGPAIGTVSDLISGGNDLLEITTSDGRKLLIPFVEAIVPEVKLKAGWLLLTPPPGLLEL.

The PRC barrel domain occupies 101 to 174 (EGEFHLLDLV…WLLLTPPPGL (74 aa)).

The protein belongs to the RimM family. As to quaternary structure, binds ribosomal protein uS19.

The protein localises to the cytoplasm. Its function is as follows. An accessory protein needed during the final step in the assembly of 30S ribosomal subunit, possibly for assembly of the head region. Essential for efficient processing of 16S rRNA. May be needed both before and after RbfA during the maturation of 16S rRNA. It has affinity for free ribosomal 30S subunits but not for 70S ribosomes. This chain is Ribosome maturation factor RimM, found in Synechococcus sp. (strain CC9605).